Here is a 219-residue protein sequence, read N- to C-terminus: GPI ethanolamine phosphate transferase, stabilizing subunit (219 aa).

The next 6 membrane-spanning stretches (helical) occupy residues 11 to 31, 42 to 62, 86 to 106, 113 to 133, 155 to 175, and 189 to 209; these read YTHLLCIFSIILSVFIPSLFL, TWLCICSGFVTAVNLVLYLVV, YFLMSCFSFHVIFVLYGAPLI, FLFAVILSTFTTVPCLCLLGP, LQITTISSFVGAWLGALPIPL, and TLGATFGYVAGLVISPLWIYW.

This sequence belongs to the PIGF family. Part of the ethanolamine phosphate transferase 3 complex composed by PIGO and PIGF. Part of the ethanolamine phosphate transferase 2 complex with PIGG. PIGF is required to stabilize PIGG and PIGO.

It is found in the endoplasmic reticulum membrane. It participates in glycolipid biosynthesis; glycosylphosphatidylinositol-anchor biosynthesis. Its function is as follows. Stabilizing subunit of the ethanolamine phosphate transferase 3 and ethanolamine phosphate transferase 2 complexes that sequentially transfer an ethanolamine phosphate (EtNP) from a phosphatidylethanolamine (PE) to the 6-OH position of the third alpha-1,2-linked mannose and the second alpha-1,6-linked mannose of the alpha-D-Man-(1-&gt;2)-alpha-D-Man-(1-&gt;6)-2-PEtn-alpha-D-Man-(1-&gt;4)-alpha-D-GlcN-(1-&gt;6)-(1-radyl,2-acyl-sn-glycero-3-phospho)-2-acyl-inositol (also termed H6) intermediate to generate a 6-PEtn-alpha-D-Man-(1-&gt;2)-6-PEtn-alpha-D-Man-(1-&gt;6)-2-PEtn-alpha-D-Man-(1-&gt;4)-alpha-D-GlcN-(1-&gt;6)-(1-radyl,2-acyl-sn-glycero-3-phospho)-2-acyl-inositol (also termed H8). Participates in the tenth and eleventh steps of the glycosylphosphatidylinositol-anchor biosynthesis, in association with PIGO and PIGG, respectively. The sequence is that of GPI ethanolamine phosphate transferase, stabilizing subunit from Homo sapiens (Human).